Consider the following 156-residue polypeptide: Protein-export protein SecB (156 aa).

Belongs to the SecB family. As to quaternary structure, homotetramer, a dimer of dimers. One homotetramer interacts with 1 SecA dimer.

The protein localises to the cytoplasm. One of the proteins required for the normal export of preproteins out of the cell cytoplasm. It is a molecular chaperone that binds to a subset of precursor proteins, maintaining them in a translocation-competent state. It also specifically binds to its receptor SecA. In Yersinia enterocolitica serotype O:8 / biotype 1B (strain NCTC 13174 / 8081), this protein is Protein-export protein SecB.